The sequence spans 114 residues: Protein preY, mitochondrial (114 aa).

The transit peptide at 1 to 35 (MLSGARCRLASALRGTRAPPSAVARRCLHASGSRP) directs the protein to the mitochondrion. A disordered region spans residues 14-49 (RGTRAPPSAVARRCLHASGSRPLADRGKKTEEPPRD). Over residues 36 to 49 (LADRGKKTEEPPRD) the composition is skewed to basic and acidic residues. One can recognise a TRM112 domain in the interval 51-97 (DPALLEFLVCPLSKKPLRYEASTNELINEELGIAYPIIDGIPNMIPQ).

Belongs to the PREY family. Interacts (via TRM112 domain) with NDUFAF5; the interaction is direct and stabilizes NDUFAF5 protein. Interacts with COQ5; the interaction is direct, stabilizes COQ5 protein and associates PYURF with COQ enzyme complex.

It is found in the mitochondrion. In terms of biological role, in mitochondria, S-adenosylmethionine-dependent methyltransferase chaperone that supports both coenzyme Q biosynthesis, by stabilizing its components, such as COQ5, and NADH:ubiquinone oxidoreductase complex (complex I, MT-ND1) assembly, by stabilizing complex I assembly factors, such as NDUFAF5. This Homo sapiens (Human) protein is Protein preY, mitochondrial.